The chain runs to 500 residues: Glycerol kinase (500 aa).

Thr-15 provides a ligand contact to ADP. ATP-binding residues include Thr-15, Thr-16, and Ser-17. Residue Thr-15 participates in sn-glycerol 3-phosphate binding. Arg-19 is an ADP binding site. 4 residues coordinate sn-glycerol 3-phosphate: Arg-85, Glu-86, Tyr-137, and Asp-245. Glycerol-binding residues include Arg-85, Glu-86, Tyr-137, Asp-245, and Gln-246. ADP is bound by residues Thr-267 and Gly-310. 4 residues coordinate ATP: Thr-267, Gly-310, Gln-314, and Gly-411. Gly-411 and Asn-415 together coordinate ADP.

The protein belongs to the FGGY kinase family.

It carries out the reaction glycerol + ATP = sn-glycerol 3-phosphate + ADP + H(+). The protein operates within polyol metabolism; glycerol degradation via glycerol kinase pathway; sn-glycerol 3-phosphate from glycerol: step 1/1. With respect to regulation, inhibited by fructose 1,6-bisphosphate (FBP). In terms of biological role, key enzyme in the regulation of glycerol uptake and metabolism. Catalyzes the phosphorylation of glycerol to yield sn-glycerol 3-phosphate. This Aeromonas salmonicida (strain A449) protein is Glycerol kinase.